The chain runs to 155 residues: NADPH-dependent 7-cyano-7-deazaguanine reductase (155 aa).

The active-site Thioimide intermediate is cysteine 53. The Proton donor role is filled by aspartate 60. Residues 75–77 (VES) and 94–95 (HE) each bind substrate.

This sequence belongs to the GTP cyclohydrolase I family. QueF type 1 subfamily.

The protein localises to the cytoplasm. It catalyses the reaction 7-aminomethyl-7-carbaguanine + 2 NADP(+) = 7-cyano-7-deazaguanine + 2 NADPH + 3 H(+). The protein operates within tRNA modification; tRNA-queuosine biosynthesis. Functionally, catalyzes the NADPH-dependent reduction of 7-cyano-7-deazaguanine (preQ0) to 7-aminomethyl-7-deazaguanine (preQ1). The chain is NADPH-dependent 7-cyano-7-deazaguanine reductase from Brucella suis (strain ATCC 23445 / NCTC 10510).